We begin with the raw amino-acid sequence, 496 residues long: NADH-quinone oxidoreductase subunit N (496 aa).

14 helical membrane passes run L8–I28, M37–F57, Q73–T93, L110–M130, Y131–D151, L162–L182, T203–F223, P235–V255, G271–F291, M300–I320, G341–T361, A386–V406, V421–I441, and F464–A484.

It belongs to the complex I subunit 2 family. As to quaternary structure, NDH-1 is composed of 14 different subunits. Subunits NuoA, H, J, K, L, M, N constitute the membrane sector of the complex.

It is found in the cell membrane. It carries out the reaction a quinone + NADH + 5 H(+)(in) = a quinol + NAD(+) + 4 H(+)(out). In terms of biological role, NDH-1 shuttles electrons from NADH, via FMN and iron-sulfur (Fe-S) centers, to quinones in the respiratory chain. The immediate electron acceptor for the enzyme in this species is believed to be a menaquinone. Couples the redox reaction to proton translocation (for every two electrons transferred, four hydrogen ions are translocated across the cytoplasmic membrane), and thus conserves the redox energy in a proton gradient. This is NADH-quinone oxidoreductase subunit N from Desulfitobacterium hafniense (strain DSM 10664 / DCB-2).